A 297-amino-acid chain; its full sequence is N-acetylmuramic acid 6-phosphate etherase (297 aa).

The SIS domain maps to 56–219 (AIEAFNKGGR…STISMIGIGK (164 aa)). Residue glutamate 84 is the Proton donor of the active site. Residue glutamate 115 is part of the active site.

Belongs to the GCKR-like family. MurNAc-6-P etherase subfamily. As to quaternary structure, homodimer.

It catalyses the reaction N-acetyl-D-muramate 6-phosphate + H2O = N-acetyl-D-glucosamine 6-phosphate + (R)-lactate. It functions in the pathway amino-sugar metabolism; N-acetylmuramate degradation. In terms of biological role, specifically catalyzes the cleavage of the D-lactyl ether substituent of MurNAc 6-phosphate, producing GlcNAc 6-phosphate and D-lactate. The sequence is that of N-acetylmuramic acid 6-phosphate etherase from Lactococcus lactis subsp. cremoris (strain MG1363).